Here is a 65-residue protein sequence, read N- to C-terminus: Large ribosomal subunit protein bL35 (65 aa).

The interval 1–30 (MPKMKTVSGAAKRFKKTGSGRFKSKQSHLR) is disordered. Residues 12-30 (KRFKKTGSGRFKSKQSHLR) show a composition bias toward basic residues.

Belongs to the bacterial ribosomal protein bL35 family.

This chain is Large ribosomal subunit protein bL35, found in Alteromonas mediterranea (strain DSM 17117 / CIP 110805 / LMG 28347 / Deep ecotype).